We begin with the raw amino-acid sequence, 37 residues long: Cytochrome b6-f complex subunit 5 (37 aa).

Residues 5 to 25 traverse the membrane as a helical segment; it reads LLSGIVLGLIVVTLSGLFYAA.

This sequence belongs to the PetG family. In terms of assembly, the 4 large subunits of the cytochrome b6-f complex are cytochrome b6, subunit IV (17 kDa polypeptide, PetD), cytochrome f and the Rieske protein, while the 4 small subunits are PetG, PetL, PetM and PetN. The complex functions as a dimer.

It is found in the cellular thylakoid membrane. Functionally, component of the cytochrome b6-f complex, which mediates electron transfer between photosystem II (PSII) and photosystem I (PSI), cyclic electron flow around PSI, and state transitions. PetG is required for either the stability or assembly of the cytochrome b6-f complex. The protein is Cytochrome b6-f complex subunit 5 of Trichormus variabilis (strain ATCC 29413 / PCC 7937) (Anabaena variabilis).